The primary structure comprises 512 residues: Delta(14)-sterol reductase (512 aa).

8 consecutive transmembrane segments (helical) span residues 27-47 (IGAS…GFLC), 100-120 (AVLG…LLPA), 140-160 (ACLS…VRGP), 172-192 (YIQL…YVYL), 242-262 (SFME…AFAA), 278-298 (WTPL…VIIS), 324-344 (FGFM…SIQA), and 353-373 (ALGP…YYIF). NADP(+) is bound by residues lysine 380, arginine 384, leucine 407, tryptophan 412, and 419-420 (NY). 2 helical membrane passes run 418 to 438 (INYL…LAAG) and 458 to 478 (MKGA…ILLI). NADP(+)-binding positions include aspartate 484, 488-492 (CRRKY), and tyrosine 499.

It belongs to the ERG4/ERG24 family.

The protein localises to the membrane. It carries out the reaction 4,4-dimethyl-5alpha-cholesta-8,24-dien-3beta-ol + NADP(+) = 4,4-dimethyl-5alpha-cholesta-8,14,24-trien-3beta-ol + NADPH + H(+). It participates in steroid biosynthesis; zymosterol biosynthesis; zymosterol from lanosterol: step 2/6. Its function is as follows. Reduces the C14=C15 double bond of 4,4-dimethyl-cholesta-8,14,24-trienol to produce 4,4-dimethyl-cholesta-8,24-dienol. The protein is Delta(14)-sterol reductase (ERG3) of Septoria lycopersici (Tomato leaf spot fungus).